The following is a 264-amino-acid chain: Thiazole synthase (264 aa).

The Schiff-base intermediate with DXP role is filled by Lys-104. Residues Gly-165, Ala-191–Gly-192, and Asn-213–Thr-214 contribute to the 1-deoxy-D-xylulose 5-phosphate site.

Belongs to the ThiG family. As to quaternary structure, homotetramer. Forms heterodimers with either ThiH or ThiS.

It localises to the cytoplasm. The catalysed reaction is [ThiS sulfur-carrier protein]-C-terminal-Gly-aminoethanethioate + 2-iminoacetate + 1-deoxy-D-xylulose 5-phosphate = [ThiS sulfur-carrier protein]-C-terminal Gly-Gly + 2-[(2R,5Z)-2-carboxy-4-methylthiazol-5(2H)-ylidene]ethyl phosphate + 2 H2O + H(+). It functions in the pathway cofactor biosynthesis; thiamine diphosphate biosynthesis. In terms of biological role, catalyzes the rearrangement of 1-deoxy-D-xylulose 5-phosphate (DXP) to produce the thiazole phosphate moiety of thiamine. Sulfur is provided by the thiocarboxylate moiety of the carrier protein ThiS. In vitro, sulfur can be provided by H(2)S. The protein is Thiazole synthase of Oleidesulfovibrio alaskensis (strain ATCC BAA-1058 / DSM 17464 / G20) (Desulfovibrio alaskensis).